We begin with the raw amino-acid sequence, 699 residues long: Sarcoplasmic reticulum histidine-rich calcium-binding protein (699 aa).

A signal peptide spans 1-28; the sequence is MGHHRPWLHASVLWAGVASLLLPPAMTQ. The tract at residues 50–95 is disordered; it reads SEEASAELRHHLHSPRDHPDENKDVSTENGHHFWSHPDREKEDEDV. Over residues 55-89 the composition is skewed to basic and acidic residues; that stretch reads AELRHHLHSPRDHPDENKDVSTENGHHFWSHPDRE. Position 76 is a phosphothreonine; by FAM20C (Thr-76). Repeat copies occupy residues 106–121, 134–154, 155–177, 180–213, 214–237, 238–270, 271–294, 295–318, 319–342, and 343–365. The interval 106–342 is 6 X approximate tandem repeats; the sequence is HRSQDHKVGD…SGEHHHHVPD (237 aa). The segment at 106–365 is 4 X tandem repeats, acidic; the sequence is HRSQDHKVGD…DVSTERWHQG (260 aa). Ser-119 and Ser-145 each carry phosphoserine; by FAM20C. The interval 127–617 is disordered; that stretch reads HGGQARGHRG…EDTGPQDAQE (491 aa). Basic residues-rich tracts occupy residues 148 to 158 and 173 to 183; these read HRHHLPSHRSH and HHHHILRHGHR. The span at 187 to 206 shows a compositional bias: acidic residues; it reads GEDDEGEEEEEEEEEEEEAS. The segment covering 231 to 241 has biased composition (basic residues); that stretch reads HHHHGPSHRHQ. Residues 244–263 are compositionally biased toward acidic residues; it reads EEDDDDDDDDDDDDDDDDVS. The segment covering 288 to 298 has biased composition (basic residues); it reads HHHRDPSHRHR. A compositionally biased stretch (acidic residues) spans 302-311; the sequence is EDDNDDDDVS. A compositionally biased stretch (basic and acidic residues) spans 324–335; that stretch reads HRKEEVEAVSGE. Ser-333 carries the phosphoserine modification. A compositionally biased stretch (basic residues) spans 336 to 347; that stretch reads HHHHVPDHRHQG. Phosphoserine; by FAM20C is present on residues Ser-358 and Ser-431. 2 stretches are compositionally biased toward basic and acidic residues: residues 444–463 and 470–481; these read SHQDEETGHGQRGSIKEMSH and VVKDRSHLRKDD. Ser-494 bears the Phosphoserine; by FAM20C mark. Residues 504–515 show a composition bias toward basic and acidic residues; it reads QGEKGTHHGSRD. Composition is skewed to acidic residues over residues 532 to 551 and 567 to 581; these read QEEEEEEDKEEEEEEEDEER and SEEEEEEEEGLEEDE. Ser-567 bears the Phosphoserine; by FAM20C mark. The metal-binding stretch occupies residues 627 to 673; that stretch reads CGYCSFCNRCTECESCHCDEENMGEHCDQCQHCQFCYLCPLVCETVC.

This sequence belongs to the HRC family.

The protein localises to the sarcoplasmic reticulum lumen. Functionally, may play a role in the regulation of calcium sequestration or release in the SR of skeletal and cardiac muscle. In Homo sapiens (Human), this protein is Sarcoplasmic reticulum histidine-rich calcium-binding protein (HRC).